We begin with the raw amino-acid sequence, 933 residues long: Isoleucine--tRNA ligase (933 aa).

Positions 57–67 match the 'HIGH' region motif; that stretch reads PYANGNIHVGH. Residue Glu-554 coordinates L-isoleucyl-5'-AMP. The short motif at 595-599 is the 'KMSKS' region element; that stretch reads KMSKS. Lys-598 is an ATP binding site.

This sequence belongs to the class-I aminoacyl-tRNA synthetase family. IleS type 1 subfamily. In terms of assembly, monomer.

It localises to the cytoplasm. It catalyses the reaction tRNA(Ile) + L-isoleucine + ATP = L-isoleucyl-tRNA(Ile) + AMP + diphosphate. Its function is as follows. Catalyzes the attachment of isoleucine to tRNA(Ile). As IleRS can inadvertently accommodate and process structurally similar amino acids such as valine, to avoid such errors it has two additional distinct tRNA(Ile)-dependent editing activities. One activity is designated as 'pretransfer' editing and involves the hydrolysis of activated Val-AMP. The other activity is designated 'posttransfer' editing and involves deacylation of mischarged Val-tRNA(Ile). The sequence is that of Isoleucine--tRNA ligase from Streptococcus pyogenes serotype M3 (strain ATCC BAA-595 / MGAS315).